Here is a 251-residue protein sequence, read N- to C-terminus: E3 ubiquitin-protein ligase Os06g0535400 (251 aa).

Transmembrane regions (helical) follow at residues 28–48, 102–122, and 127–147; these read VVAA…YCFA, LANR…IVVF, and ADVV…VWLS. An RING-type; atypical zinc finger spans residues 185–227; the sequence is CCVCLAGMREAQALRDLPRCGHRFHAKCIGKWLTAHPTCPVCR.

It is found in the membrane. The enzyme catalyses S-ubiquitinyl-[E2 ubiquitin-conjugating enzyme]-L-cysteine + [acceptor protein]-L-lysine = [E2 ubiquitin-conjugating enzyme]-L-cysteine + N(6)-ubiquitinyl-[acceptor protein]-L-lysine.. It functions in the pathway protein modification; protein ubiquitination. Possesses E3 ubiquitin-protein ligase in vitro. The sequence is that of E3 ubiquitin-protein ligase Os06g0535400 from Oryza sativa subsp. japonica (Rice).